The following is a 92-amino-acid chain: C-C motif chemokine 3 (92 aa).

A signal peptide spans 1 to 26; it reads MQVSTAALAVLLCTVALCNRISATFA. Cystine bridges form between C33-C57 and C34-C73.

It belongs to the intercrine beta (chemokine CC) family. As to quaternary structure, self-associates. Also heterodimer of MIP-1-alpha(4-69) and MIP-1-beta(3-69). Interacts with CCR1.

Its subcellular location is the secreted. Its function is as follows. Monokine with inflammatory and chemokinetic properties. Binds to CCR1, CCR4 and CCR5. One of the major HIV-suppressive factors produced by CD8+ T-cells. Recombinant MIP-1-alpha induces a dose-dependent inhibition of different strains of HIV-1, HIV-2, and simian immunodeficiency virus (SIV). This is C-C motif chemokine 3 (CCL3) from Macaca mulatta (Rhesus macaque).